A 364-amino-acid polypeptide reads, in one-letter code: Chorismate synthase (364 aa).

Arginine 48 is a binding site for NADP(+). FMN is bound by residues 131 to 133 (RSS), 243 to 244 (NA), glycine 288, 303 to 307 (KPTSS), and arginine 329.

This sequence belongs to the chorismate synthase family. Homotetramer. Requires FMNH2 as cofactor.

The catalysed reaction is 5-O-(1-carboxyvinyl)-3-phosphoshikimate = chorismate + phosphate. Its pathway is metabolic intermediate biosynthesis; chorismate biosynthesis; chorismate from D-erythrose 4-phosphate and phosphoenolpyruvate: step 7/7. Its function is as follows. Catalyzes the anti-1,4-elimination of the C-3 phosphate and the C-6 proR hydrogen from 5-enolpyruvylshikimate-3-phosphate (EPSP) to yield chorismate, which is the branch point compound that serves as the starting substrate for the three terminal pathways of aromatic amino acid biosynthesis. This reaction introduces a second double bond into the aromatic ring system. The chain is Chorismate synthase from Brucella abortus (strain S19).